A 316-amino-acid chain; its full sequence is Ribosomal RNA large subunit methyltransferase F (316 aa).

This sequence belongs to the methyltransferase superfamily. METTL16/RlmF family.

The protein resides in the cytoplasm. The catalysed reaction is adenosine(1618) in 23S rRNA + S-adenosyl-L-methionine = N(6)-methyladenosine(1618) in 23S rRNA + S-adenosyl-L-homocysteine + H(+). Functionally, specifically methylates the adenine in position 1618 of 23S rRNA. The polypeptide is Ribosomal RNA large subunit methyltransferase F (Pseudomonas putida (strain GB-1)).